We begin with the raw amino-acid sequence, 70 residues long: Pyruvate-flavodoxin oxidoreductase (70 aa).

It belongs to the pyruvate:ferredoxin/flavodoxin oxidoreductase family.

It catalyses the reaction oxidized [flavodoxin] + pyruvate + CoA + 2 H(+) = reduced [flavodoxin] + acetyl-CoA + CO2. Oxidoreductase required for the transfer of electrons from pyruvate to flavodoxin, which reduces nitrogenase. The sequence is that of Pyruvate-flavodoxin oxidoreductase (nifJ) from Anabaena variabilis.